Consider the following 145-residue polypeptide: MAIYGIGTDIVQLSRIAAVLERTGGRFAEKVLGPDELRVFHARRARSEARGIAFLATRFSAKEAFSKAIGLGMHWPMTWRALQTLNQRSGEPYVVASGELADWLAARGITARVTVSDERDYAVSFVVAETDAPPPAPAPVPRTLP.

Mg(2+) is bound by residues aspartate 9 and glutamate 63.

It belongs to the P-Pant transferase superfamily. AcpS family. Requires Mg(2+) as cofactor.

The protein localises to the cytoplasm. The catalysed reaction is apo-[ACP] + CoA = holo-[ACP] + adenosine 3',5'-bisphosphate + H(+). In terms of biological role, transfers the 4'-phosphopantetheine moiety from coenzyme A to a Ser of acyl-carrier-protein. The polypeptide is Holo-[acyl-carrier-protein] synthase (Burkholderia vietnamiensis (strain G4 / LMG 22486) (Burkholderia cepacia (strain R1808))).